Reading from the N-terminus, the 347-residue chain is Cannabinoid receptor 2 (347 aa).

Over Met-1 to Gln-33 the chain is Extracellular. Residue Asn-11 is glycosylated (N-linked (GlcNAc...) asparagine). Residues Ile-34–Leu-59 traverse the membrane as a helical segment. Over Ser-60–Leu-71 the chain is Cytoplasmic. Residues Phe-72 to Val-92 traverse the membrane as a helical segment. Topologically, residues Ile-93–Ala-104 are extracellular. A helical transmembrane segment spans residues Ile-105–Val-129. The Cytoplasmic portion of the chain corresponds to Asp-130–Arg-149. The helical transmembrane segment at Ala-150–Trp-172 threads the bilayer. The Extracellular portion of the chain corresponds to Thr-173–Asn-188. A helical membrane pass occupies residues Asp-189–Trp-214. The Cytoplasmic segment spans residues Lys-215–Thr-246. Residues Leu-247–His-267 traverse the membrane as a helical segment. Residues Ser-268 to Glu-279 lie on the Extracellular side of the membrane. Residues Ala-280–Leu-301 traverse the membrane as a helical segment. At Arg-302–Thr-347 the chain is on the cytoplasmic side. The disordered stretch occupies residues Pro-326–Thr-347. 2 positions are modified to phosphoserine: Ser-335 and Ser-336. Thr-338 is subject to Phosphothreonine.

This sequence belongs to the G-protein coupled receptor 1 family. In terms of tissue distribution, expressed by cells of hematopoietic origin. Expressed in skin in suprabasal layers and hair follicles, in brain by neurons and glial cells and by osteoblasts, osteocytes, osteoclasts (at protein level).

It is found in the cell membrane. Its subcellular location is the cell projection. The protein localises to the dendrite. It localises to the perikaryon. Heterotrimeric G protein-coupled receptor for endocannabinoid 2-arachidonoylglycerol mediating inhibition of adenylate cyclase. May function in inflammatory response, nociceptive transmission and bone homeostasis. The sequence is that of Cannabinoid receptor 2 (Cnr2) from Mus musculus (Mouse).